The chain runs to 481 residues: Cys-Gly metallodipeptidase DUG1 (481 aa).

A Zn(2+)-binding site is contributed by His102. The active site involves Asp104. Asp137 provides a ligand contact to Zn(2+). Glu171 functions as the Proton acceptor in the catalytic mechanism. Zn(2+) contacts are provided by Glu172, Asp200, and His450. Phosphoserine is present on Ser451.

It belongs to the peptidase M20A family. In terms of assembly, homodimer. Component of the GSH degradosomal complex composed of at least DUG1, DUG2 and DUG3. Requires Zn(2+) as cofactor. Mn(2+) is required as a cofactor.

The protein localises to the cytoplasm. Its subcellular location is the mitochondrion. Functionally, catalytic component of the GSH degradosomal complex involved in the degradation of glutathione (GSH) and other peptides containing a gamma-glu-X bond. Also functions in a DUG2-DUG3-independent manner as a dipeptidase with high specificity for Cys-Gly and no activity toward tri- or tetrapeptides. The protein is Cys-Gly metallodipeptidase DUG1 (DUG1) of Saccharomyces cerevisiae (strain ATCC 204508 / S288c) (Baker's yeast).